We begin with the raw amino-acid sequence, 648 residues long: 60 kDa heat shock protein homolog 1, mitochondrial (648 aa).

The N-terminal 55 residues, 1–55, are a transit peptide targeting the mitochondrion; that stretch reads MFRSCVPKAITSSRCFARMYSKDVRFGSGVRAMMIRGVDILADAVAVTMGPKGRS.

It belongs to the chaperonin (HSP60) family.

The protein localises to the mitochondrion matrix. Its function is as follows. Prevents misfolding and promotes the refolding and proper assembly of unfolded polypeptides generated under stress conditions. The protein is 60 kDa heat shock protein homolog 1, mitochondrial (Hsp60B) of Drosophila melanogaster (Fruit fly).